The primary structure comprises 369 residues: Ribonuclease D (369 aa).

The 166-residue stretch at 1 to 166 folds into the 3'-5' exonuclease domain; sequence MITTNDALAA…PIAHKLMEQV (166 aa). The 80-residue stretch at 206-285 folds into the HRDC domain; that stretch reads RPRQLACLKL…AQAQALLEDA (80 aa).

It belongs to the RNase D family. A divalent metal cation is required as a cofactor.

It is found in the cytoplasm. It carries out the reaction Exonucleolytic cleavage that removes extra residues from the 3'-terminus of tRNA to produce 5'-mononucleotides.. Its function is as follows. Exonuclease involved in the 3' processing of various precursor tRNAs. Initiates hydrolysis at the 3'-terminus of an RNA molecule and releases 5'-mononucleotides. This chain is Ribonuclease D, found in Cronobacter turicensis (strain DSM 18703 / CCUG 55852 / LMG 23827 / z3032).